The chain runs to 206 residues: MRYPIWRVGVFIAAAVWPLFWLYEAWSAVLGPDPGKVLVDRLGLGTLILLLITLAMTPLQKLSGWAGWIAVRRQLGLWCFAYVVLHLAAYCVFVLGLDWSQLGVELRKRPYIIVGALGFLLLLVLAVTSNRYSQRRLGSRWKKLHRLVYVVLGLGLLHMLWIVRADLKEWAIYASIGALLLVLRIPPVMRRIPRLIAKKPLSATKA.

A run of 6 helical transmembrane segments spans residues 10 to 30, 42 to 62, 75 to 95, 110 to 130, 147 to 167, and 169 to 189; these read VFIA…SAVL, LGLG…LQKL, LGLW…VFVL, PYII…VTSN, LVYV…RADL, and EWAI…PPVM.

This sequence belongs to the MsrQ family. Heterodimer of a catalytic subunit (MsrP) and a heme-binding subunit (MsrQ). The cofactor is FMN. Requires heme b as cofactor.

The protein resides in the cell inner membrane. Functionally, part of the MsrPQ system that repairs oxidized periplasmic proteins containing methionine sulfoxide residues (Met-O), using respiratory chain electrons. Thus protects these proteins from oxidative-stress damage caused by reactive species of oxygen and chlorine generated by the host defense mechanisms. MsrPQ is essential for the maintenance of envelope integrity under bleach stress, rescuing a wide series of structurally unrelated periplasmic proteins from methionine oxidation. MsrQ provides electrons for reduction to the reductase catalytic subunit MsrP, using the quinone pool of the respiratory chain. This chain is Protein-methionine-sulfoxide reductase heme-binding subunit MsrQ, found in Pseudomonas fluorescens (strain SBW25).